Reading from the N-terminus, the 273-residue chain is MENRKNYFHLHLVSDSTGETLIAAGRAAAAQFQSSHALEHVYPLIRNKKQLMQVLDAIDGAPGIVLYTIVDRELAGMIDQRCREIGVPCVSVLDPIIELFQSYLGSPSRRRSGAQHVMDADYFARIEALNFTMDHDDGQMPADFNEADVVLIGVSRTSKTPTSIYLANRGIKTANIPIVPGVPLPDGLLRATKPLVVGLIASADRLSQVRQHRVLGTTQSFHGEEYTDRAAISEELKYARTLCARNNWPLIDVTRRSIEETAAAIVALRPRLR.

153 to 160 (GVSRTSKT) serves as a coordination point for ADP.

It belongs to the pyruvate, phosphate/water dikinase regulatory protein family. PDRP subfamily.

The enzyme catalyses N(tele)-phospho-L-histidyl/L-threonyl-[pyruvate, phosphate dikinase] + ADP = N(tele)-phospho-L-histidyl/O-phospho-L-threonyl-[pyruvate, phosphate dikinase] + AMP + H(+). It catalyses the reaction N(tele)-phospho-L-histidyl/O-phospho-L-threonyl-[pyruvate, phosphate dikinase] + phosphate + H(+) = N(tele)-phospho-L-histidyl/L-threonyl-[pyruvate, phosphate dikinase] + diphosphate. In terms of biological role, bifunctional serine/threonine kinase and phosphorylase involved in the regulation of the pyruvate, phosphate dikinase (PPDK) by catalyzing its phosphorylation/dephosphorylation. In Sinorhizobium fredii (strain NBRC 101917 / NGR234), this protein is Putative pyruvate, phosphate dikinase regulatory protein.